The sequence spans 163 residues: Nucleotide-binding protein all4662 (163 aa).

The protein belongs to the YajQ family.

Functionally, nucleotide-binding protein. The polypeptide is Nucleotide-binding protein all4662 (Nostoc sp. (strain PCC 7120 / SAG 25.82 / UTEX 2576)).